A 163-amino-acid polypeptide reads, in one-letter code: MAKDNSFDIVSEMNLEEVKNAIQIAEKEILNRYDFKGSKSEMSLDNGDLVLISDDDYKLEQLKDVLITKLIKRGVPTKNLDYQKVENALGGTVRQRVKLKSGIDKDDAKKINNAIKESKLKVKSQIQDDQIRVTGKSRDDLQAVMQLVRELELSVDAQFTNFR.

Belongs to the YajQ family.

Functionally, nucleotide-binding protein. The polypeptide is Nucleotide-binding protein EAT1b_2037 (Exiguobacterium sp. (strain ATCC BAA-1283 / AT1b)).